Consider the following 82-residue polypeptide: Ferredoxin (82 aa).

Residues 3 to 31 enclose the 4Fe-4S ferredoxin-type domain; sequence KYTIVDKDTCIACGACGAAAPDIYDYDDE. [4Fe-4S] cluster contacts are provided by Cys12, Cys15, Cys18, and Cys62.

The cofactor is [4Fe-4S] cluster.

Functionally, ferredoxins are iron-sulfur proteins that transfer electrons in a wide variety of metabolic reactions. This ferredoxin may act as a phosphodonor to cytochrome P450 BioI. This chain is Ferredoxin (fer), found in Bacillus subtilis (strain 168).